The following is a 380-amino-acid chain: Reducing-end xylose-releasing exo-oligoxylanase Rex8A (380 aa).

Glutamate 70 serves as the catalytic Proton donor. Aspartate 265 (proton acceptor) is an active-site residue.

It belongs to the glycosyl hydrolase 8 (cellulase D) family.

The catalysed reaction is Hydrolysis of (1-&gt;4)-beta-D-xylose residues from the reducing end of oligosaccharides.. The protein operates within glycan degradation; xylan degradation. Functionally, involved in depolymerization of xylan, a major component of the lignocellulosic substrates. Acts as an exo-oligoxylanase that efficiently hydrolyzes xylooligosaccharides, releasing xylose from their reducing ends. Hydrolyzes xylooligomers of 3 to 6 xylose units to xylose and xylobiose. Besides linear xylooligosaccharides, also hydrolyzes branched xylooligomers, such as xylooligomers decorated with 4-O-methyl-D-glucuronic acid moieties. Its proposed role is the degradation of xylooligomers produced by the activity of extracellular xylanases once they have been transported inside cells. Shows minor activity on polymeric xylan (glucuronoxylan from beechwood). Is not active on cellooligosaccharides or cellulosic substrates, or on other polysaccharides such as pectin, polygalacturonic acid, laminarin, or lichenan. This Paenibacillus barcinonensis protein is Reducing-end xylose-releasing exo-oligoxylanase Rex8A.